The chain runs to 77 residues: Large ribosomal subunit protein uL29 (77 aa).

It belongs to the universal ribosomal protein uL29 family.

The polypeptide is Large ribosomal subunit protein uL29 (Mycobacterium avium (strain 104)).